The following is a 554-amino-acid chain: (S)-1-hydroxy-N-methylcanadine 13-hydroxylase CYP82X2 (554 aa).

A helical transmembrane segment spans residues Ile-23–Ile-43. Position 494 (Cys-494) interacts with heme.

This sequence belongs to the cytochrome P450 family. It depends on heme as a cofactor. In terms of tissue distribution, highly expressed in capsules. Expressed is stems.

It localises to the membrane. It carries out the reaction (S)-1-hydroxy-N-methylcanadine + reduced [NADPH--hemoprotein reductase] + O2 = (13S,14R)-1,13-dihydroxy-N-methylcanadine + oxidized [NADPH--hemoprotein reductase] + H2O + H(+). The protein operates within alkaloid biosynthesis. Its function is as follows. Cytochrome P450 involved in the biosynthesis of the benzylisoquinoline alkaloid noscapine. Converts (S)-1-hydroxy-N-methylcanadine to (13S,14R)-1,13-dihydroxy-N-methylcanadine. In Papaver somniferum (Opium poppy), this protein is (S)-1-hydroxy-N-methylcanadine 13-hydroxylase CYP82X2.